Consider the following 205-residue polypeptide: Ras-related and estrogen-regulated growth inhibitor-like protein (205 aa).

Residues M1–V205 are small GTPase-like. GTP-binding positions include E11–K18, D58–Q64, and N123–D126.

Belongs to the small GTPase superfamily. Ras family.

The catalysed reaction is GTP + H2O = GDP + phosphate + H(+). Binds GDP/GTP and may possess intrinsic GTPase activity. This chain is Ras-related and estrogen-regulated growth inhibitor-like protein (RERGL), found in Homo sapiens (Human).